The sequence spans 79 residues: Protein OPG081 (79 aa).

Topologically, residues 2–8 (VDAITVL) are intravirion. A helical membrane pass occupies residues 9–29 (TAIGITVLMLLMVISGAALIV). At 30 to 47 (KELNPNDIFTMQSLKFNR) the chain is on the virion surface side. A helical membrane pass occupies residues 48 to 68 (AVTIFKYIGLFIYIPGTIILY). The Intravirion portion of the chain corresponds to 69–79 (ATYVKSLLMKS).

Belongs to the orthopoxvirus OPG081 family.

It localises to the virion membrane. Envelope protein. The polypeptide is Protein OPG081 (OPG081) (Vaccinia virus (strain Western Reserve) (VACV)).